A 167-amino-acid polypeptide reads, in one-letter code: uncharacterized protein (167 aa).

This is an uncharacterized protein from Escherichia coli (strain K12).